Here is a 421-residue protein sequence, read N- to C-terminus: Phosphoribosylamine--glycine ligase (421 aa).

The region spanning 108–314 (KEIMVKYNVP…FAQNIDDIMM (207 aa)) is the ATP-grasp domain. 134 to 195 (IEEQGAPIVV…EEFLDGEEFS (62 aa)) is a binding site for ATP. The Mg(2+) site is built by Glu-284 and Asn-286.

This sequence belongs to the GARS family. It depends on Mg(2+) as a cofactor. The cofactor is Mn(2+).

The catalysed reaction is 5-phospho-beta-D-ribosylamine + glycine + ATP = N(1)-(5-phospho-beta-D-ribosyl)glycinamide + ADP + phosphate + H(+). Its pathway is purine metabolism; IMP biosynthesis via de novo pathway; N(1)-(5-phospho-D-ribosyl)glycinamide from 5-phospho-alpha-D-ribose 1-diphosphate: step 2/2. The chain is Phosphoribosylamine--glycine ligase from Streptococcus pyogenes serotype M6 (strain ATCC BAA-946 / MGAS10394).